The sequence spans 438 residues: GTPase Der (438 aa).

EngA-type G domains follow at residues 2-164 (HKVA…PEDD) and 173-343 (IRIS…EKWQ). Residues 8-15 (GRPNVGKS), 55-59 (DTGGL), 116-119 (NKID), 179-186 (GRPNVGKS), 226-230 (DTAGI), and 288-291 (NKWD) contribute to the GTP site. Positions 344–428 (SRIGTSELNR…PVRLKWKEKG (85 aa)) constitute a KH-like domain.

It belongs to the TRAFAC class TrmE-Era-EngA-EngB-Septin-like GTPase superfamily. EngA (Der) GTPase family. Associates with the 50S ribosomal subunit.

In terms of biological role, GTPase that plays an essential role in the late steps of ribosome biogenesis. In Deinococcus radiodurans (strain ATCC 13939 / DSM 20539 / JCM 16871 / CCUG 27074 / LMG 4051 / NBRC 15346 / NCIMB 9279 / VKM B-1422 / R1), this protein is GTPase Der.